Here is a 278-residue protein sequence, read N- to C-terminus: Type II restriction enzyme NgoPII (278 aa).

The protein belongs to the NgoPII type II restriction endonuclease family.

The enzyme catalyses Endonucleolytic cleavage of DNA to give specific double-stranded fragments with terminal 5'-phosphates.. Functionally, a P subtype restriction enzyme that recognizes the double-stranded sequence 5'-GGCC-3' and cleaves after G-2. The protein is Type II restriction enzyme NgoPII (ngoPIIR) of Neisseria gonorrhoeae.